A 622-amino-acid polypeptide reads, in one-letter code: Intermediate filament protein ifc-2 (622 aa).

Positions 19-54 (SGTYASGFGQLVSGMSSAGAICTTQIRDAREREKRE) are head. An IF rod domain is found at 51–399 (EKREIGLLND…ILLNGANVTT (349 aa)). Residues 55-86 (IGLLNDRLADYIEKVRFLEAQNRCLSHDIDIL) are coil 1A. Residues 87-99 (RNGFSGGGHVSGL) form a linker 1 region. A coil 1B region spans residues 100–237 (FDAEINQAKH…TENNVRIEQE (138 aa)). The interval 238–255 (LVFIRRDTTADNRDYFRH) is linker 12. The coil 2 stretch occupies residues 256–399 (ELQAAIRDIR…ILLNGANVTT (144 aa)). Residues 400 to 550 (YTSNTHGSGS…RVDVGGFRIE (151 aa)) are tail. Residues 509–622 (SGRHFHSWYL…EERAWFVYLD (114 aa)) form the LTD domain.

Belongs to the intermediate filament family. Expressed in intestinal cells and at desmosomes in intestine and pharynx of the larva.

It localises to the cytoplasm. Cytoplasmic intermediate filaments provide mechanical strength to cells. Not essential protein, although its absence leads to mild defects in locomotion. The polypeptide is Intermediate filament protein ifc-2 (ifc-2) (Caenorhabditis elegans).